The chain runs to 73 residues: Sec-independent protein translocase protein TatA (73 aa).

Residues 1–21 (MFGLGAPELILILILALIIFG) form a helical membrane-spanning segment. Positions 52–73 (EAAKIDDGNNNSDKEKATRQAS) are disordered.

The protein belongs to the TatA/E family. In terms of assembly, forms a complex with TatC.

It localises to the cell membrane. Its function is as follows. Part of the twin-arginine translocation (Tat) system that transports large folded proteins containing a characteristic twin-arginine motif in their signal peptide across membranes. TatA could form the protein-conducting channel of the Tat system. This is Sec-independent protein translocase protein TatA from Moorella thermoacetica (strain ATCC 39073 / JCM 9320).